The following is a 169-amino-acid chain: Cytochrome c-type biogenesis protein CcmE (169 aa).

Residues 1-7 (MTRKQRR) are Cytoplasmic-facing. Residues 8-28 (MTIIGGSLAVLALAAALVLNA) form a helical; Signal-anchor for type II membrane protein membrane-spanning segment. Over 29–169 (LRDSIVFFST…AQGNPQGAVR (141 aa)) the chain is Periplasmic. His122 and Tyr126 together coordinate heme. The disordered stretch occupies residues 143–169 (DDYGGKASDGVKPAATTAQGNPQGAVR). Residues 158-169 (TTAQGNPQGAVR) are compositionally biased toward polar residues.

This sequence belongs to the CcmE/CycJ family.

Its subcellular location is the cell inner membrane. Heme chaperone required for the biogenesis of c-type cytochromes. Transiently binds heme delivered by CcmC and transfers the heme to apo-cytochromes in a process facilitated by CcmF and CcmH. This chain is Cytochrome c-type biogenesis protein CcmE, found in Bradyrhizobium diazoefficiens (strain JCM 10833 / BCRC 13528 / IAM 13628 / NBRC 14792 / USDA 110).